Reading from the N-terminus, the 219-residue chain is Small ribosomal subunit protein uS3c (219 aa).

A KH type-2 domain is found at 43 to 118 (IKNYVQKNMK…KLNIAITRIA (76 aa)).

It belongs to the universal ribosomal protein uS3 family. As to quaternary structure, part of the 30S ribosomal subunit.

The protein resides in the plastid. It localises to the chloroplast. The polypeptide is Small ribosomal subunit protein uS3c (rps3) (Panax ginseng (Korean ginseng)).